The chain runs to 228 residues: NAD(P)H-hydrate epimerase (228 aa).

Positions 9-209 (VRAVERLAHR…LLGLTPAFLA (201 aa)) constitute a YjeF N-terminal domain. 53–57 (NNGGD) lines the (6S)-NADPHX pocket. The K(+) site is built by N54 and D115. (6S)-NADPHX contacts are provided by residues 119–125 (GIGLARP) and D148. S151 contacts K(+).

The protein belongs to the NnrE/AIBP family. K(+) serves as cofactor.

The enzyme catalyses (6R)-NADHX = (6S)-NADHX. The catalysed reaction is (6R)-NADPHX = (6S)-NADPHX. Its function is as follows. Catalyzes the epimerization of the S- and R-forms of NAD(P)HX, a damaged form of NAD(P)H that is a result of enzymatic or heat-dependent hydration. This is a prerequisite for the S-specific NAD(P)H-hydrate dehydratase to allow the repair of both epimers of NAD(P)HX. This is NAD(P)H-hydrate epimerase from Bordetella parapertussis (strain 12822 / ATCC BAA-587 / NCTC 13253).